Here is a 465-residue protein sequence, read N- to C-terminus: Eukaryotic translation initiation factor 3 subunit M (465 aa).

Residues 215 to 383 (EEMSYNHVIL…GEFLVHRATY (169 aa)) enclose the PCI domain. The disordered stretch occupies residues 429 to 465 (AAAESGREGGARGGAGERRRGGGGHQGPREVDLVGGD). 2 stretches are compositionally biased toward basic and acidic residues: residues 433-448 (SGREGGARGGAGERRR) and 455-465 (GPREVDLVGGD).

It belongs to the eIF-3 subunit M family. In terms of assembly, component of the eukaryotic translation initiation factor 3 (eIF-3) complex.

The protein localises to the cytoplasm. Functionally, component of the eukaryotic translation initiation factor 3 (eIF-3) complex, which is involved in protein synthesis of a specialized repertoire of mRNAs and, together with other initiation factors, stimulates binding of mRNA and methionyl-tRNAi to the 40S ribosome. The eIF-3 complex specifically targets and initiates translation of a subset of mRNAs involved in cell proliferation. This chain is Eukaryotic translation initiation factor 3 subunit M, found in Coccidioides immitis (strain RS) (Valley fever fungus).